The primary structure comprises 208 residues: Large ribosomal subunit protein uL3c (208 aa).

The tract at residues 129 to 165 is disordered; the sequence is TRGPMTHGSKNHREPGSIGQGSTPGKVHKGKKMAGRL.

It belongs to the universal ribosomal protein uL3 family. As to quaternary structure, part of the 50S ribosomal subunit.

The protein resides in the plastid. It is found in the chloroplast. Functionally, one of the primary rRNA binding proteins, it binds directly near the 3'-end of the 23S rRNA, where it nucleates assembly of the 50S subunit. The chain is Large ribosomal subunit protein uL3c (rpl3) from Rhodomonas salina (Cryptomonas salina).